A 550-amino-acid polypeptide reads, in one-letter code: Phosphatidylinositol 4-kinase gamma 2 (550 aa).

2 consecutive Ubiquitin-like domains span residues 34 to 111 (SVLV…YDPL) and 112 to 190 (LVTV…VEDT). The disordered stretch occupies residues 228-247 (VDGLNKGSPPVRSAEGTGGT). Residues 234–532 (GSPPVRSAEG…SVLPASSEAT (299 aa)) form the PI3K/PI4K catalytic domain. Positions 240-246 (SAEGTGG) are G-loop. ATP-binding positions include 241 to 247 (AEGTGGT), lysine 263, and 359 to 362 (QMFM). The tract at residues 392 to 400 (ANADRHAGN) is catalytic loop. The segment at 415-441 (PIDHGYCLPENFEDCTFEWLYWPQAKL) is activation loop. Position 417 (aspartate 417) interacts with ATP.

It belongs to the PI3/PI4-kinase family. Type II PI4K subfamily.

It localises to the membrane. It catalyses the reaction a 1,2-diacyl-sn-glycero-3-phospho-(1D-myo-inositol) + ATP = a 1,2-diacyl-sn-glycero-3-phospho-(1D-myo-inositol 4-phosphate) + ADP + H(+). Its function is as follows. The phosphorylation of phosphatidylinositol (PI) to PI4P is the first committed step in the generation of phosphatidylinositol 4,5-bisphosphate (PIP2), a precursor of the second messenger inositol 1,4,5-trisphosphate (InsP3). The chain is Phosphatidylinositol 4-kinase gamma 2 (PI4KG2) from Arabidopsis thaliana (Mouse-ear cress).